The primary structure comprises 515 residues: Cytidine and dCMP deaminase domain-containing protein 1 (515 aa).

2 stretches are compositionally biased toward polar residues: residues Met-1–Glu-11 and Ser-18–Thr-27. Disordered stretches follow at residues Met-1–Thr-27 and Arg-56–Lys-83. Over residues Gln-60–Lys-83 the composition is skewed to basic and acidic residues. Residues Gly-71 to Glu-169 enclose the CMP/dCMP-type deaminase 1 domain. Zn(2+)-binding residues include His-110, Cys-135, and Cys-138. The short motif at Asn-272–Leu-284 is the Nuclear export signal element. In terms of domain architecture, CMP/dCMP-type deaminase 2 spans Glu-318–Glu-483. His-399 is a Zn(2+) binding site. Glu-401 acts as the Proton donor in catalysis. Zn(2+)-binding residues include Cys-427 and Cys-430. The Bipartite nuclear localization signal motif lies at Arg-489 to Cys-511. Positions Val-494–His-515 are disordered.

It belongs to the cytidine and deoxycytidylate deaminase family. It depends on Zn(2+) as a cofactor.

The protein localises to the cytoplasm. It localises to the nucleus. It catalyses the reaction 2'-deoxycytidine + H2O + H(+) = 2'-deoxyuridine + NH4(+). The enzyme catalyses cytidine + H2O + H(+) = uridine + NH4(+). In terms of biological role, catalyzes the deamination of cytidine and deoxycytidine into uridine and deoxyuridine, respectively. May play an important role in testicular development and spermatogenesis. The chain is Cytidine and dCMP deaminase domain-containing protein 1 (CDADC1) from Pongo abelii (Sumatran orangutan).